The chain runs to 435 residues: MTDNTILIKDALILNPLDFKEIKGSLLIKNDKIAEIGTDIDESNVDKVIDAKGKILLPGFVNTHTHLSMTLFRGLADDLSLDSWLNDNIWPMEANLTSEYCYIGALLGAIELIKSGTTTFSDMYFYMEDVAKAVEESGIRAVLSYGMIDFGDDEKREHEIKENIALFEKCNGMADGRIKVFFGPHSPYTASKDLLEDVRWLANEYNTGIHIHVSETQKEINDSLEAHDLRPFEYLDSIGFLGPDVVAAHSVWLSHNEIEIIKRNNVKISHNPCSNMKLASGIAPIQDLITNDICVGIGTDGASSNNNLDLIEELRTASLLQKVNLLNPKALTSNEALAMGTIKGAEVLGLEQEIGSIEVGKKADLILIDTNNANMVPDSSATSSNIIYSANGYNVDTTICDGKILMENRKLTTLDEEEIYKKARKAIEELKEASK.

Zn(2+)-binding residues include H64 and H66. Substrate is bound by residues E93 and H185. Residue H212 coordinates Zn(2+). Positions 215 and 300 each coordinate substrate. Residue D300 coordinates Zn(2+).

The protein belongs to the metallo-dependent hydrolases superfamily. MTA/SAH deaminase family. As to quaternary structure, homotetramer. It depends on Zn(2+) as a cofactor.

It catalyses the reaction 5'-deoxyadenosine + H2O + H(+) = 5'-deoxyinosine + NH4(+). It carries out the reaction S-adenosyl-L-homocysteine + H2O + H(+) = S-inosyl-L-homocysteine + NH4(+). The enzyme catalyses S-methyl-5'-thioadenosine + H2O + H(+) = S-methyl-5'-thioinosine + NH4(+). The catalysed reaction is adenosine + H2O + H(+) = inosine + NH4(+). Its pathway is amino-acid biosynthesis; S-adenosyl-L-methionine biosynthesis. Functionally, catalyzes the deamination of three SAM-derived enzymatic products, namely 5'-deoxyadenosine, S-adenosyl-L-homocysteine, and 5'-methylthioadenosine, to produce the inosine analogs. Can also deaminate adenosine. The preferred substrate for this enzyme is 5'-deoxyadenosine, but all these substrates are efficiently deaminated. Likely functions in a S-adenosyl-L-methionine (SAM) recycling pathway from S-adenosyl-L-homocysteine (SAH) produced from SAM-dependent methylation reactions. May also be involved in the recycling of 5'-deoxyadenosine, whereupon the 5'-deoxyribose moiety of 5'-deoxyinosine is further metabolized to deoxyhexoses used for the biosynthesis of aromatic amino acids in methanogens. The chain is 5'-deoxyadenosine deaminase from Methanobrevibacter smithii (strain ATCC 35061 / DSM 861 / OCM 144 / PS).